Consider the following 95-residue polypeptide: Secreted RxLR effector protein 20 (95 aa).

The first 20 residues, 1 to 20 (MQSPYIILFALVTLLGSISG), serve as a signal peptide directing secretion. The RxLR signature appears at 47 to 50 (RLLR).

The protein belongs to the RxLR effector family.

The protein localises to the secreted. It is found in the host nucleus. Its subcellular location is the host cytoplasm. In terms of biological role, secreted effector that partially suppresses the host cell death induced by cell death-inducing proteins. The protein is Secreted RxLR effector protein 20 of Plasmopara viticola (Downy mildew of grapevine).